A 97-amino-acid chain; its full sequence is MSRICELTGKGRQIGHNVSHANNKTKRTFLPNLQNVTLLSDALGKSVKLRVSTHGLRSVEHNGGLDNWLMKTGDDQLSANARKLKKEVAKKLAEKAA.

It belongs to the bacterial ribosomal protein bL28 family.

This Sphingopyxis alaskensis (strain DSM 13593 / LMG 18877 / RB2256) (Sphingomonas alaskensis) protein is Large ribosomal subunit protein bL28.